Here is a 397-residue protein sequence, read N- to C-terminus: MALRVTRNTRLASSENQGALPGKAAVANKPGLRPRAALGEIGNNPQTRQALRKKEVKVAPKVEAVAEKAPVVQQPKKESPKVQHDVQILSEPSSPVPMETSGCASDDLCQAFSDVMLNIKDVDADDYDNPMLCSEYVKDIYLYLRQLEIEQAVRPKYLEGSEVTGNMRAILIDWLVQVQIKFKLLQETMYMTVAVIDRFLQDHPVPKKQLQLVGVTAMFIASKYEEMYPPEIADFAFVTDRAYTTGQIRDMEMKILRVLDFSFGKPLPLQFLRRASKIGDVTAEHHTLAKYFLELTMVDYDMVHFPPSQVASARYALTLKVFNCGDWTPTLQHYMGYTEDSLVPVMQHIARNVVRVNEGLSKHLAVKNKYSSQKQMRIASISQLKSSLIKDLAKQIS.

Positions 1 to 17 (MALRVTRNTRLASSENQ) are enriched in polar residues. The interval 1 to 30 (MALRVTRNTRLASSENQGALPGKAAVANKP) is disordered.

The protein belongs to the cyclin family. Cyclin AB subfamily. As to quaternary structure, interacts with the CDK1 protein kinase to form a serine/threonine kinase holoenzyme complex also known as maturation promoting factor (MPF). The cyclin subunit imparts substrate specificity to the complex.

Its function is as follows. Essential for the control of the cell cycle at the G2/M (mitosis) transition. This is G2/mitotic-specific cyclin-B1 (ccnb1) from Carassius auratus (Goldfish).